Reading from the N-terminus, the 180-residue chain is MSRIGKLPIKIVDSVKVDIKDNIVTVEGKRGKLSQELKSSIKVRVEDSNIIVERSFDDKQTRAFHGLYRSLISNMVKGVSDGFSKSLTISGIGYRVEQQGTSLFFNLGYSTQFEYVIPEGINIRLDGNTKIAVEGIDKCRVGQVAAEIRGLRVPEPYKGKGIKYDNEVIRRKVGKSGVKK.

This sequence belongs to the universal ribosomal protein uL6 family. In terms of assembly, part of the 50S ribosomal subunit.

This protein binds to the 23S rRNA, and is important in its secondary structure. It is located near the subunit interface in the base of the L7/L12 stalk, and near the tRNA binding site of the peptidyltransferase center. In Borrelia turicatae (strain 91E135), this protein is Large ribosomal subunit protein uL6.